The chain runs to 75 residues: UPF0352 protein KPN78578_25810 (75 aa).

This sequence belongs to the UPF0352 family.

The protein is UPF0352 protein KPN78578_25810 of Klebsiella pneumoniae subsp. pneumoniae (strain ATCC 700721 / MGH 78578).